The following is a 1142-amino-acid chain: Collagen alpha-1(XIX) chain (1142 aa).

Positions 1–23 (MRLTGPWKLWLWMSIFLLPASTS) are cleaved as a signal peptide. Residues 50–234 (NKLEVSGFDL…LHQLKIYCSA (185 aa)) enclose the Laminin G-like domain. Disordered regions lie at residues 288 to 680 (IPNK…GDPI), 704 to 1009 (PGLK…PGIP), and 1053 to 1142 (YGRP…TGGN). 3 consecutive Collagen-like domains span residues 292 to 349 (GEAG…GEKG), 350 to 391 (DPAL…ALPG), and 392 to 433 (SLGI…GIQG). Residues 292–351 (GEAGLPGAPGSPGQKGHKGEPGENGLHGAPGFPGQKGEQGFEGSKGETGEKGEQGEKGDP) are triple-helical region 1 (COL1). Residues 335–350 (SKGETGEKGEQGEKGD) are compositionally biased toward basic and acidic residues. Residues 370–429 (GPPGPKGEKGDTGPPGPPALPGSLGIQGPQGPPGKEGQRGRRGKTGPPGKPGPPGPPGPP) are triple-helical region 2 (COL2). Residues 390–404 (PGSLGIQGPQGPPGK) show a composition bias toward low complexity. The segment covering 417 to 429 (PGKPGPPGPPGPP) has biased composition (pro residues). Basic and acidic residues-rich tracts occupy residues 444–463 (KDNK…DKGE) and 478–496 (QKGE…DRGE). Residues 448–688 (GNDEHEAGGL…PIALPLLGDI (241 aa)) form a triple-helical region 3 (COL3) region. Collagen-like domains are found at residues 474–516 (GPKG…GPPG), 568–624 (GPPG…GPQG), 626–678 (GIPG…PPGD), 728–778 (KGDI…APGP), 779–814 (TGPP…PPGP), 845–903 (GPPG…VPGE), 904–947 (PGER…GDRG), and 948–1004 (PKGE…GSPG). Positions 640–651 (PGIQGPRGLPGL) are enriched in low complexity. Residues 700 to 818 (QASVPGLKSN…PGPPGPPGIP (119 aa)) form a triple-helical region 4 (COL4) region. Basic and acidic residues-rich tracts occupy residues 720-731 (GKYDSMARKGDI) and 743-752 (EGPKGSKGER). Pro residues-rich tracts occupy residues 806–817 (PGKPGPPGPPGI) and 840–852 (YPGP…PKGD). Positions 833–1012 (GGVNVPSYPG…PGIPGIPADA (180 aa)) are triple-helical region 5 (COL5). Basic and acidic residues predominate over residues 943-954 (PGDRGPKGERGD). A Cell attachment site motif is present at residues 952–954 (RGD). The tract at residues 1054–1111 (GRPGPPGKDGLPGPPGDPGPQGYRGQKGERGEPGIGLPGSPGLPGTSALGLPGSPGAP) is triple-helical region 6 (COL6). Low complexity predominate over residues 1093-1107 (SPGLPGTSALGLPGS). Over residues 1108 to 1119 (PGAPGPQGPPGP) the composition is skewed to pro residues.

This sequence belongs to the fibril-associated collagens with interrupted helices (FACIT) family. As to quaternary structure, oligomer; disulfide-linked. In terms of processing, prolines at the third position of the tripeptide repeating unit (G-X-Y) are hydroxylated in some or all of the chains. In terms of tissue distribution, localized to vascular, neuronal, mesenchymal, and some epithelial basement membrane zones in umbilical cord.

It is found in the secreted. The protein resides in the extracellular space. The protein localises to the extracellular matrix. Functionally, may act as a cross-bridge between fibrils and other extracellular matrix molecules. Involved in skeletal myogenesis in the developing esophagus. May play a role in organization of the pericellular matrix or the sphinteric smooth muscle. The polypeptide is Collagen alpha-1(XIX) chain (COL19A1) (Homo sapiens (Human)).